The primary structure comprises 410 residues: Replication factor C large subunit (410 aa).

An ATP-binding site is contributed by 46–53; it reads GDPGTGKT.

This sequence belongs to the activator 1 small subunits family. RfcL subfamily. Heteromultimer composed of small subunits (RfcS) and large subunits (RfcL).

In terms of biological role, part of the RFC clamp loader complex which loads the PCNA sliding clamp onto DNA. This is Replication factor C large subunit from Picrophilus torridus (strain ATCC 700027 / DSM 9790 / JCM 10055 / NBRC 100828 / KAW 2/3).